The following is a 447-amino-acid chain: MSNILQSVPVNQKVGIAFSGGLDTSAALHWMRQKGAIPYAYTANLGQPDETDYNAIPEKAKAYGAELARLIDCREQLVAEGIAALQSGAFHISTAGVTYFNTTPLGRAVTGTMLVAAMKEDNVDIWGDGSTFKGNDIERFYRYGLLMNPALRIYKPWLDDTFIQELGGRKEMSEFLIKSGFDYKMSVEKAYSTDSNILGATHEAKDLEELSSGMKIVQPIMGVAFWRDDVEVKREEVTVRFEEGRPVALNGVVYSDLVELMLEANRIGGRHGLGMSDQIENRIIEAKSRGIYEAPGLALLFIAYERLVTGIHNEDTIEQYRESGRRLGRLLYQGRWFDPQAIMLREAAQRWVARAITGEVTIELRRGNDYSILNTVSANLTYAPERLSMEKVEDAPFSPADRIGQLTMRNLDITDTRQKLGIYNDVGLLTGNTSVALPRIGKDSDKK.

Residues 17–25 and Ala43 each bind ATP; that span reads AFSGGLDTS. Tyr99 provides a ligand contact to L-citrulline. Residues Gly129 and Thr131 each coordinate ATP. Positions 131, 135, and 136 each coordinate L-aspartate. Asn135 is an L-citrulline binding site. An ATP-binding site is contributed by Asp136. Positions 139 and 192 each coordinate L-citrulline. Position 194 (Asp194) interacts with ATP. L-citrulline is bound by residues Thr201, Glu203, and Glu280.

Belongs to the argininosuccinate synthase family. Type 2 subfamily. In terms of assembly, homotetramer.

Its subcellular location is the cytoplasm. The catalysed reaction is L-citrulline + L-aspartate + ATP = 2-(N(omega)-L-arginino)succinate + AMP + diphosphate + H(+). The protein operates within amino-acid biosynthesis; L-arginine biosynthesis; L-arginine from L-ornithine and carbamoyl phosphate: step 2/3. The sequence is that of Argininosuccinate synthase from Janthinobacterium sp. (strain Marseille) (Minibacterium massiliensis).